Here is a 192-residue protein sequence, read N- to C-terminus: Ion-translocating oxidoreductase complex subunit A (192 aa).

Helical transmembrane passes span 5–25 (LLLL…FLGL), 39–59 (IGMS…SYLV), 65–85 (LPFD…AVVV), 102–122 (ALGI…VALL), 134–154 (AIYG…FSAM), and 171–191 (AIAM…TGLV).

It belongs to the NqrDE/RnfAE family. The complex is composed of six subunits: RnfA, RnfB, RnfC, RnfD, RnfE and RnfG.

It is found in the cell inner membrane. Its function is as follows. Part of a membrane-bound complex that couples electron transfer with translocation of ions across the membrane. The chain is Ion-translocating oxidoreductase complex subunit A from Shewanella baltica (strain OS185).